The following is a 517-amino-acid chain: uncharacterized protein (517 aa).

Disordered stretches follow at residues 16–148 (KDES…TITK), 156–175 (VNKE…NTTT), and 216–351 (KLEK…EENE). Low complexity predominate over residues 48 to 75 (NNNNNNNNTTTTNNNTNNSNTSTSNNSK). Residues 84–112 (FDDDDDDGDEEDEEEEDDDDDDDDDDDET) are compositionally biased toward acidic residues. The segment covering 127–143 (QPQPQPQPQPQPQPPIK) has biased composition (pro residues). Over residues 236–252 (VSSTLSNSFDPNIIHNQ) the composition is skewed to polar residues. Residues 254 to 266 (SPPPPPISIPIPL) show a composition bias toward pro residues. Composition is skewed to low complexity over residues 271–320 (NLNN…NSNI) and 327–347 (SSSM…SNNN). The stretch at 340–452 (DNSSSNNNEE…HQNQQNSMNN (113 aa)) forms a coiled coil.

This sequence belongs to the ENTR1 family.

This is an uncharacterized protein from Dictyostelium discoideum (Social amoeba).